The sequence spans 559 residues: Formate--tetrahydrofolate ligase (559 aa).

Residue 68-75 (TPAGEGKT) coordinates ATP.

The protein belongs to the formate--tetrahydrofolate ligase family.

The catalysed reaction is (6S)-5,6,7,8-tetrahydrofolate + formate + ATP = (6R)-10-formyltetrahydrofolate + ADP + phosphate. It functions in the pathway one-carbon metabolism; tetrahydrofolate interconversion. The polypeptide is Formate--tetrahydrofolate ligase (Rhizobium johnstonii (strain DSM 114642 / LMG 32736 / 3841) (Rhizobium leguminosarum bv. viciae)).